Consider the following 326-residue polypeptide: Vacuolar protein sorting-associated protein 26A-A (326 aa).

The interval 306–326 (TNFHQRFEPQEPQASAEEPEI) is disordered. The span at 315-326 (QEPQASAEEPEI) shows a compositional bias: low complexity.

It belongs to the VPS26 family. As to quaternary structure, component of the heterotrimeric retromer cargo-selective complex (CSC) which is believed to associate with variable sorting nexins to form functionally distinct retromer complex variants.

It is found in the cytoplasm. The protein resides in the endosome membrane. Its subcellular location is the early endosome. In terms of biological role, acts as a component of the retromer cargo-selective complex (CSC). The CSC is believed to be the core functional component of retromer or respective retromer complex variants acting to prevent missorting of selected transmembrane cargo proteins into the lysosomal degradation pathway. Retromer mediates retrograde transport of cargo proteins from endosomes to the trans-Golgi network (TGN). This is Vacuolar protein sorting-associated protein 26A-A (vps26a-a) from Xenopus laevis (African clawed frog).